The sequence spans 390 residues: L-seryl-tRNA(Sec) selenium transferase (390 aa).

The residue at position 225 (Lys225) is an N6-(pyridoxal phosphate)lysine.

It belongs to the SelA family. Pyridoxal 5'-phosphate serves as cofactor.

Its subcellular location is the cytoplasm. It carries out the reaction L-seryl-tRNA(Sec) + selenophosphate + H(+) = L-selenocysteinyl-tRNA(Sec) + phosphate. It participates in aminoacyl-tRNA biosynthesis; selenocysteinyl-tRNA(Sec) biosynthesis; selenocysteinyl-tRNA(Sec) from L-seryl-tRNA(Sec) (bacterial route): step 1/1. Its function is as follows. Converts seryl-tRNA(Sec) to selenocysteinyl-tRNA(Sec) required for selenoprotein biosynthesis. The polypeptide is L-seryl-tRNA(Sec) selenium transferase (Helicobacter pylori (strain J99 / ATCC 700824) (Campylobacter pylori J99)).